Reading from the N-terminus, the 381-residue chain is Cytochrome b (381 aa).

Transmembrane regions (helical) follow at residues 34 to 54 (FGSL…FLAM), 78 to 99 (WLIR…YLHI), 114 to 134 (WNIG…GYVL), and 179 to 199 (FFAF…IHLL). The heme b site is built by histidine 84 and histidine 98. Residues histidine 183 and histidine 197 each coordinate heme b. Histidine 202 provides a ligand contact to a ubiquinone. The next 4 helical transmembrane spans lie at 227–247 (YKDL…ALFL), 289–309 (LGGV…PMLH), 321–341 (MTQF…WIGG), and 348–368 (FILV…IIIP).

Belongs to the cytochrome b family. In terms of assembly, the cytochrome bc1 complex contains 3 respiratory subunits (MT-CYB, CYC1 and UQCRFS1), 2 core proteins (UQCRC1 and UQCRC2) and probably 6 low-molecular weight proteins. It depends on heme b as a cofactor.

Its subcellular location is the mitochondrion inner membrane. In terms of biological role, component of the ubiquinol-cytochrome c reductase complex (complex III or cytochrome b-c1 complex) that is part of the mitochondrial respiratory chain. The b-c1 complex mediates electron transfer from ubiquinol to cytochrome c. Contributes to the generation of a proton gradient across the mitochondrial membrane that is then used for ATP synthesis. In Squalus acanthias (Spiny dogfish), this protein is Cytochrome b (mt-cyb).